Consider the following 410-residue polypeptide: Multifunctional CCA protein (410 aa).

Residues G8 and R11 each contribute to the ATP site. Residues G8 and R11 each coordinate CTP. Mg(2+)-binding residues include E21 and D23. ATP-binding residues include R91, R137, and R140. Positions 91, 137, and 140 each coordinate CTP. An HD domain is found at 228 to 329 (TLLHQFLCLK…WKLFKSLDIL (102 aa)).

The protein belongs to the tRNA nucleotidyltransferase/poly(A) polymerase family. Bacterial CCA-adding enzyme type 1 subfamily. Monomer. Can also form homodimers and oligomers. Mg(2+) is required as a cofactor. Ni(2+) serves as cofactor.

It catalyses the reaction a tRNA precursor + 2 CTP + ATP = a tRNA with a 3' CCA end + 3 diphosphate. The enzyme catalyses a tRNA with a 3' CCA end + 2 CTP + ATP = a tRNA with a 3' CCACCA end + 3 diphosphate. Functionally, catalyzes the addition and repair of the essential 3'-terminal CCA sequence in tRNAs without using a nucleic acid template. Adds these three nucleotides in the order of C, C, and A to the tRNA nucleotide-73, using CTP and ATP as substrates and producing inorganic pyrophosphate. tRNA 3'-terminal CCA addition is required both for tRNA processing and repair. Also involved in tRNA surveillance by mediating tandem CCA addition to generate a CCACCA at the 3' terminus of unstable tRNAs. While stable tRNAs receive only 3'-terminal CCA, unstable tRNAs are marked with CCACCA and rapidly degraded. The protein is Multifunctional CCA protein of Alcanivorax borkumensis (strain ATCC 700651 / DSM 11573 / NCIMB 13689 / SK2).